We begin with the raw amino-acid sequence, 243 residues long: Type III pantothenate kinase (243 aa).

An ATP-binding site is contributed by 7–14 (DLGNSRFK). Substrate is bound by residues Tyr-91 and 98–101 (GVDR). Asp-100 functions as the Proton acceptor in the catalytic mechanism. Thr-122 provides a ligand contact to ATP. Thr-172 lines the substrate pocket.

This sequence belongs to the type III pantothenate kinase family. In terms of assembly, homodimer. Requires NH4(+) as cofactor. K(+) is required as a cofactor.

It localises to the cytoplasm. It catalyses the reaction (R)-pantothenate + ATP = (R)-4'-phosphopantothenate + ADP + H(+). The protein operates within cofactor biosynthesis; coenzyme A biosynthesis; CoA from (R)-pantothenate: step 1/5. In terms of biological role, catalyzes the phosphorylation of pantothenate (Pan), the first step in CoA biosynthesis. The protein is Type III pantothenate kinase of Stenotrophomonas maltophilia (strain K279a).